The following is a 286-amino-acid chain: Lipoyl synthase (286 aa).

Positions 34, 39, 45, 60, 64, 67, and 271 each coordinate [4Fe-4S] cluster. Residues 46–260 (WESGTATFMI…EESAYSIGFS (215 aa)) enclose the Radical SAM core domain.

It belongs to the radical SAM superfamily. Lipoyl synthase family. [4Fe-4S] cluster serves as cofactor.

Its subcellular location is the cytoplasm. The catalysed reaction is [[Fe-S] cluster scaffold protein carrying a second [4Fe-4S](2+) cluster] + N(6)-octanoyl-L-lysyl-[protein] + 2 oxidized [2Fe-2S]-[ferredoxin] + 2 S-adenosyl-L-methionine + 4 H(+) = [[Fe-S] cluster scaffold protein] + N(6)-[(R)-dihydrolipoyl]-L-lysyl-[protein] + 4 Fe(3+) + 2 hydrogen sulfide + 2 5'-deoxyadenosine + 2 L-methionine + 2 reduced [2Fe-2S]-[ferredoxin]. The protein operates within protein modification; protein lipoylation via endogenous pathway; protein N(6)-(lipoyl)lysine from octanoyl-[acyl-carrier-protein]: step 2/2. Catalyzes the radical-mediated insertion of two sulfur atoms into the C-6 and C-8 positions of the octanoyl moiety bound to the lipoyl domains of lipoate-dependent enzymes, thereby converting the octanoylated domains into lipoylated derivatives. The sequence is that of Lipoyl synthase from Picrophilus torridus (strain ATCC 700027 / DSM 9790 / JCM 10055 / NBRC 100828 / KAW 2/3).